The sequence spans 375 residues: Heat shock protein 42 (375 aa).

Disordered regions lie at residues 21-59, 81-127, 154-238, and 347-375; these read TGQRGQQGYPRQPQRPQRYHPHYGQVHVGGHHPRHHPLY, SPEY…YYHC, PYEG…ETRM, and PKPKKRIAIEEIPDEELEFEENPNPTVEN. Positions 22 to 48 are enriched in low complexity; it reads GQRGQQGYPRQPQRPQRYHPHYGQVHV. The span at 49–58 shows a compositional bias: basic residues; it reads GGHHPRHHPL. Composition is skewed to acidic residues over residues 85 to 101 and 158 to 168; these read GYDDEDGEEEDQDEDMV and TEPEIEANTEQ. A compositionally biased stretch (basic and acidic residues) spans 169-197; it reads EGEKGEEKDKKDKSEAPKEEAGETNKEKP. Ser182, Ser213, Ser214, Ser215, and Ser223 each carry phosphoserine. Residues 237-356 enclose the sHSP domain; sequence RMDLPFSPEV…PKPKKRIAIE (120 aa). Residues 357–367 show a composition bias toward acidic residues; sequence EIPDEELEFEE.

It belongs to the small heat shock protein (HSP20) family. As to quaternary structure, forms oligomeric complexes. Interacts with itself.

The protein is Heat shock protein 42 (HSP42) of Saccharomyces cerevisiae (strain ATCC 204508 / S288c) (Baker's yeast).